We begin with the raw amino-acid sequence, 524 residues long: Alkaline phosphatase, tissue-nonspecific isozyme (524 aa).

An N-terminal signal peptide occupies residues 1-17 (MILPFLVLAIGTCLTNS). Asp-60 contacts Mg(2+). Asp-60 and Ser-110 together coordinate Zn(2+). Ser-110 serves as the catalytic Phosphoserine intermediate. Residue Ser-110 is modified to Phosphoserine. The cysteines at positions 139 and 201 are disulfide-linked. Residue Asn-140 is glycosylated (N-linked (GlcNAc...) asparagine). Thr-173 serves as a coordination point for Mg(2+). Residue Asn-230 is glycosylated (N-linked (GlcNAc...) asparagine). Glu-235 contacts Ca(2+). An N-linked (GlcNAc...) asparagine glycan is attached at Asn-271. Positions 290 and 291 each coordinate Ca(2+). Asn-303 is a glycosylation site (N-linked (GlcNAc...) asparagine). Residue Asp-306 coordinates Ca(2+). A Mg(2+)-binding site is contributed by Glu-332. Zn(2+) contacts are provided by Asp-337, His-341, Asp-378, and His-379. N-linked (GlcNAc...) asparagine glycosylation is present at Asn-430. A Zn(2+)-binding site is contributed by His-454. Cys-489 and Cys-497 are disulfide-bonded. Ser-501 carries GPI-anchor amidated serine lipidation. A propeptide spans 502-524 (SASSPSPGALLLPLALFPLRTLF) (removed in mature form).

This sequence belongs to the alkaline phosphatase family. In terms of assembly, homodimer. Requires Mg(2+) as cofactor. Zn(2+) serves as cofactor. It depends on Ca(2+) as a cofactor. In terms of processing, N-glycosylated.

The protein localises to the cell membrane. The protein resides in the extracellular vesicle membrane. It localises to the mitochondrion membrane. Its subcellular location is the mitochondrion intermembrane space. The enzyme catalyses a phosphate monoester + H2O = an alcohol + phosphate. It catalyses the reaction diphosphate + H2O = 2 phosphate + H(+). The catalysed reaction is pyridoxal 5'-phosphate + H2O = pyridoxal + phosphate. It carries out the reaction phosphoethanolamine + H2O = ethanolamine + phosphate. The enzyme catalyses N-phosphocreatine + H2O = creatine + phosphate. It catalyses the reaction ATP + H2O = ADP + phosphate + H(+). The catalysed reaction is ADP + H2O = AMP + phosphate + H(+). It carries out the reaction AMP + H2O = adenosine + phosphate. Its activity is regulated as follows. Phosphatase activity is specifically inhibited by 5-((5-chloro-2-methoxyphenyl)sulfonamido)nicotinamide (SBI-425). Alkaline phosphatase that metabolizes various phosphate compounds and plays a key role in skeletal mineralization and adaptive thermogenesis. Has broad substrate specificity and can hydrolyze a considerable variety of compounds: however, only a few substrates, such as diphosphate (inorganic pyrophosphate; PPi), pyridoxal 5'-phosphate (PLP) and N-phosphocreatine are natural substrates. Plays an essential role in skeletal and dental mineralization via its ability to hydrolyze extracellular diphosphate, a potent mineralization inhibitor, to phosphate: it thereby promotes hydroxyapatite crystal formation and increases inorganic phosphate concentration. Acts in a non-redundant manner with PHOSPHO1 in skeletal mineralization: while PHOSPHO1 mediates the initiation of hydroxyapatite crystallization in the matrix vesicles (MVs), ALPL/TNAP catalyzes the spread of hydroxyapatite crystallization in the extracellular matrix. Also promotes dephosphorylation of osteopontin (SSP1), an inhibitor of hydroxyapatite crystallization in its phosphorylated state; it is however unclear whether ALPL/TNAP mediates SSP1 dephosphorylation via a direct or indirect manner. Catalyzes dephosphorylation of PLP to pyridoxal (PL), the transportable form of vitamin B6, in order to provide a sufficient amount of PLP in the brain, an essential cofactor for enzymes catalyzing the synthesis of diverse neurotransmitters. Additionally, also able to mediate ATP degradation in a stepwise manner to adenosine, thereby regulating the availability of ligands for purinergic receptors. Also capable of dephosphorylating microbial products, such as lipopolysaccharides (LPS) as well as other phosphorylated small-molecules, such as poly-inosine:cytosine (poly I:C). Acts as a key regulator of adaptive thermogenesis as part of the futile creatine cycle: localizes to the mitochondria of thermogenic fat cells and acts by mediating hydrolysis of N-phosphocreatine to initiate a futile cycle of creatine dephosphorylation and phosphorylation. During the futile creatine cycle, creatine and N-phosphocreatine are in a futile cycle, which dissipates the high energy charge of N-phosphocreatine as heat without performing any mechanical or chemical work. This Rattus norvegicus (Rat) protein is Alkaline phosphatase, tissue-nonspecific isozyme (Alpl).